Consider the following 146-residue polypeptide: MNSMFRFWIPKTSISMQLRMLSTQTRQALEQAVKEDPIVLFMKGTPTRPMCGFSLKAIQILSLENVASDKLVTYNVLSNDELREGIKEFSDWPTIPQLYINGEFVGGSDILASMHKSGELHKILKEINALAPEQPKDSEEETTKKD.

A Glutaredoxin domain is found at 26-131; that stretch reads RQALEQAVKE…KILKEINALA (106 aa). Lys43 serves as a coordination point for glutathione. Cys51 contacts [2Fe-2S] cluster. Glutathione contacts are provided by residues 83 to 87, Ile95, and 108 to 109; these read REGIK and SD.

The protein belongs to the glutaredoxin family. Monothiol subfamily. As to quaternary structure, homodimer. Interacts with ISA1 and ISA2.

It is found in the mitochondrion. Functionally, monothiol glutaredoxin involved in mitochondrial iron-sulfur (Fe/S) cluster transfer. Receives 2Fe/2S clusters from scaffold protein isu1 and mediates their transfer to apoproteins, to the 4Fe/FS cluster biosynthesis machinery, or export from mitochondrion. The protein is Monothiol glutaredoxin-5, mitochondrial of Schizosaccharomyces pombe (strain 972 / ATCC 24843) (Fission yeast).